Here is a 72-residue protein sequence, read N- to C-terminus: UPF0270 protein YheU (72 aa).

The protein belongs to the UPF0270 family.

This Salmonella choleraesuis (strain SC-B67) protein is UPF0270 protein YheU.